Consider the following 484-residue polypeptide: Aldehyde dehydrogenase family 3 member A2 (484 aa).

At 1-463 (MERQVQRLRQ…FLLKQFNKGR (463 aa)) the chain is on the cytoplasmic side. Residue 185–190 (GNTAVG) coordinates NAD(+). Active-site residues include Glu-207 and Cys-241. Ser-293 is subject to Phosphoserine. A helical transmembrane segment spans residues 464–484 (LQLLLLVCLVAVAAVIVKDQL). Residues 481 to 484 (KDQL) carry the Prevents secretion from ER motif.

It belongs to the aldehyde dehydrogenase family. In terms of assembly, homodimer. In terms of processing, the N-terminus is blocked.

The protein localises to the microsome membrane. The protein resides in the endoplasmic reticulum membrane. It catalyses the reaction an aldehyde + NAD(+) + H2O = a carboxylate + NADH + 2 H(+). The enzyme catalyses a fatty aldehyde + NAD(+) + H2O = a fatty acid + NADH + 2 H(+). The catalysed reaction is (2E)-hexadecenal + NAD(+) + H2O = (E)-hexadec-2-enoate + NADH + 2 H(+). It carries out the reaction hexadecanoate + NADH + 2 H(+) = hexadecanal + NAD(+) + H2O. It catalyses the reaction 22-oxodocosanoate + NAD(+) + H2O = docosanedioate + NADH + 2 H(+). The enzyme catalyses 2,6,10,14-tetramethylpentadecanal + NAD(+) + H2O = 2,6,10,14-tetramethylpentadecanoate + NADH + 2 H(+). The catalysed reaction is octadecanal + NAD(+) + H2O = octadecanoate + NADH + 2 H(+). It carries out the reaction dodecanoate + NADH + 2 H(+) = dodecanal + NAD(+) + H2O. It catalyses the reaction decanal + NAD(+) + H2O = decanoate + NADH + 2 H(+). The enzyme catalyses tetradecanal + NAD(+) + H2O = tetradecanoate + NADH + 2 H(+). The catalysed reaction is octanal + NAD(+) + H2O = octanoate + NADH + 2 H(+). It carries out the reaction heptanal + NAD(+) + H2O = heptanoate + NADH + 2 H(+). It catalyses the reaction (2E,6E)-farnesal + NAD(+) + H2O = (2E,6E)-farnesoate + NADH + 2 H(+). In terms of biological role, catalyzes the oxidation of medium and long-chain aliphatic aldehydes to fatty acids. Active on a variety of saturated and unsaturated aliphatic aldehydes between 6 and 24 carbons in length. Responsible for conversion of the sphingosine 1-phosphate (S1P) degradation product hexadecenal to hexadecenoic acid. The polypeptide is Aldehyde dehydrogenase family 3 member A2 (Aldh3a2) (Rattus norvegicus (Rat)).